The sequence spans 394 residues: Putative nickel insertion protein (394 aa).

The protein belongs to the LarC family.

The chain is Putative nickel insertion protein from Syntrophotalea carbinolica (strain DSM 2380 / NBRC 103641 / GraBd1) (Pelobacter carbinolicus).